We begin with the raw amino-acid sequence, 144 residues long: ATP synthase subunit 9, mitochondrial (144 aa).

The N-terminal 63 residues, 1–63 (MASTRVLASR…ATRQITQKRA (63 aa)), are a transit peptide targeting the mitochondrion. A run of 2 helical transmembrane segments spans residues 83–103 (TAAI…AALL) and 120–140 (AILG…VALM).

Belongs to the ATPase C chain family. In terms of assembly, F-type ATPases have 2 components, CF(1) - the catalytic core - and CF(0) - the membrane proton channel. CF(1) has five subunits: alpha(3), beta(3), gamma(1), delta(1), epsilon(1). CF(0) has three main subunits: a, b and c.

The protein resides in the mitochondrion membrane. Mitochondrial membrane ATP synthase (F(1)F(0) ATP synthase or Complex V) produces ATP from ADP in the presence of a proton gradient across the membrane which is generated by electron transport complexes of the respiratory chain. F-type ATPases consist of two structural domains, F(1) - containing the extramembraneous catalytic core and F(0) - containing the membrane proton channel, linked together by a central stalk and a peripheral stalk. During catalysis, ATP synthesis in the catalytic domain of F(1) is coupled via a rotary mechanism of the central stalk subunits to proton translocation. Part of the complex F(0) domain. A homomeric c-ring of probably 10 subunits is part of the complex rotary element. The sequence is that of ATP synthase subunit 9, mitochondrial (ATP9) from Podospora anserina (Pleurage anserina).